Here is a 307-residue protein sequence, read N- to C-terminus: Auxin-induced protein PCNT115 (307 aa).

Tyrosine 64 (proton donor) is an active-site residue. Histidine 136 contributes to the substrate binding site. Position 215-225 (215-225) interacts with NADP(+); it reads SPLGRGFLSSG.

This sequence belongs to the aldo/keto reductase family. Aldo/keto reductase 2 subfamily.

This Nicotiana tabacum (Common tobacco) protein is Auxin-induced protein PCNT115.